Here is a 325-residue protein sequence, read N- to C-terminus: Ribonucleoside-diphosphate reductase subunit beta (325 aa).

Residues Asp73, Glu104, and His107 each coordinate Fe cation. The active site involves Tyr111. 3 residues coordinate Fe cation: Glu164, Glu198, and His201.

This sequence belongs to the ribonucleoside diphosphate reductase small chain family. As to quaternary structure, tetramer of two alpha and two beta subunits. It depends on Fe cation as a cofactor.

It carries out the reaction a 2'-deoxyribonucleoside 5'-diphosphate + [thioredoxin]-disulfide + H2O = a ribonucleoside 5'-diphosphate + [thioredoxin]-dithiol. In terms of biological role, provides the precursors necessary for DNA synthesis. Catalyzes the biosynthesis of deoxyribonucleotides from the corresponding ribonucleotides. The sequence is that of Ribonucleoside-diphosphate reductase subunit beta (nrdF) from Mycobacterium leprae (strain TN).